The following is a 201-amino-acid chain: Pyridoxal 5'-phosphate synthase subunit PdxT (201 aa).

L-glutamine is bound at residue 51 to 53 (GES). C83 (nucleophile) is an active-site residue. L-glutamine contacts are provided by residues R112 and 141-142 (IR). Active-site charge relay system residues include H182 and E184.

The protein belongs to the glutaminase PdxT/SNO family. In terms of assembly, in the presence of PdxS, forms a dodecamer of heterodimers. Only shows activity in the heterodimer.

The enzyme catalyses aldehydo-D-ribose 5-phosphate + D-glyceraldehyde 3-phosphate + L-glutamine = pyridoxal 5'-phosphate + L-glutamate + phosphate + 3 H2O + H(+). The catalysed reaction is L-glutamine + H2O = L-glutamate + NH4(+). It functions in the pathway cofactor biosynthesis; pyridoxal 5'-phosphate biosynthesis. In terms of biological role, catalyzes the hydrolysis of glutamine to glutamate and ammonia as part of the biosynthesis of pyridoxal 5'-phosphate. The resulting ammonia molecule is channeled to the active site of PdxS. This chain is Pyridoxal 5'-phosphate synthase subunit PdxT, found in Thermobifida fusca (strain YX).